The following is a 184-amino-acid chain: Signal peptidase complex catalytic subunit SEC11 (184 aa).

The Cytoplasmic portion of the chain corresponds to 1-28 (MDFIKEQYNSLVLDLRKTFRNKRDGLSH). The chain crosses the membrane as a helical; Signal-anchor for type II membrane protein span at residues 29 to 49 (ILNVICLLLNALMIWKLLVVF). Over 50–184 (TGCESPVVVV…MLIMILMGYE (135 aa)) the chain is Lumenal. Residues serine 63, histidine 101, and aspartate 127 each act as charge relay system in the active site. Residues 170 to 181 (AIVSIMLIMILM) are C-terminal short (CTS) helix.

The protein belongs to the peptidase S26B family. In terms of assembly, component of the signal peptidase complex (SPC) composed of a catalytic subunit SEC11/SPC21 and three accessory subunits SPC25, SPC3/SPC22, SPC1/SPC12. Within the complex, interacts with SPC25. The complex induces a local thinning of the ER membrane which is used to measure the length of the signal peptide (SP) h-region of protein substrates. This ensures the selectivity of the complex towards h-regions shorter than 18-20 amino acids. The complex interacts with the SEC61 channel-forming translocon complex and is involved in the import of classical signal sequence-containing proteins. In terms of processing, phosphorylated. Phosphorylation increases catalytic activity.

The protein resides in the endoplasmic reticulum membrane. The enzyme catalyses Cleavage of hydrophobic, N-terminal signal or leader sequences from secreted and periplasmic proteins.. With respect to regulation, phosphorylation increases catalytic activity. Ca(2+) slightly increases catalytic activity in vitro. In terms of biological role, catalytic component of the signal peptidase complex (SPC) which catalyzes the cleavage of N-terminal signal sequences from nascent proteins as they are translocated into the lumen of the endoplasmic reticulum. Specifically cleaves N-terminal signal peptides that contain a hydrophobic alpha-helix (h-region) shorter than 18-20 amino acids. In Plasmodium falciparum (isolate 3D7), this protein is Signal peptidase complex catalytic subunit SEC11.